A 176-amino-acid polypeptide reads, in one-letter code: Protein MOTHER of FT and TFL1 homolog 1 (176 aa).

Belongs to the phosphatidylethanolamine-binding protein family.

Its function is as follows. May form complexes with phosphorylated ligands by interfering with kinases and their effectors. This is Protein MOTHER of FT and TFL1 homolog 1 from Oryza sativa subsp. japonica (Rice).